Here is a 501-residue protein sequence, read N- to C-terminus: Aldehyde dehydrogenase, cytosolic 1 (501 aa).

NAD(+) is bound at residue 246–251; that stretch reads GSTEVG. The Proton acceptor role is filled by Glu269. Residue Cys303 is the Nucleophile of the active site.

It belongs to the aldehyde dehydrogenase family. As to quaternary structure, homotetramer. In terms of tissue distribution, eye specific, with very high expression in the lens.

The protein localises to the cytoplasm. The enzyme catalyses an aldehyde + NAD(+) + H2O = a carboxylate + NADH + 2 H(+). It participates in alcohol metabolism; ethanol degradation; acetate from ethanol: step 2/2. Functionally, major component of the eye of elephant shrews, which in contrast to other mammals, possesses both a lens- and a non-lens class-1 aldehyde dehydrogenase 1. This eye-specific form is a structural protein of the lens and, in other part of the eye, serves as the major form of ALDH1. Can convert/oxidize retinaldehyde to retinoic acid. The chain is Aldehyde dehydrogenase, cytosolic 1 (ALDH1) from Elephantulus edwardii (Cape long-eared elephant shrew).